Reading from the N-terminus, the 227-residue chain is Ribosomal RNA large subunit methyltransferase E (227 aa).

S-adenosyl-L-methionine contacts are provided by Gly78, Trp80, Asp103, Asp119, and Asp143. The active-site Proton acceptor is the Lys183.

Belongs to the class I-like SAM-binding methyltransferase superfamily. RNA methyltransferase RlmE family.

The protein localises to the cytoplasm. It carries out the reaction uridine(2552) in 23S rRNA + S-adenosyl-L-methionine = 2'-O-methyluridine(2552) in 23S rRNA + S-adenosyl-L-homocysteine + H(+). Functionally, specifically methylates the uridine in position 2552 of 23S rRNA at the 2'-O position of the ribose in the fully assembled 50S ribosomal subunit. In Rickettsia felis (strain ATCC VR-1525 / URRWXCal2) (Rickettsia azadi), this protein is Ribosomal RNA large subunit methyltransferase E.